The primary structure comprises 159 residues: Ribosomal RNA large subunit methyltransferase H (159 aa).

S-adenosyl-L-methionine contacts are provided by residues leucine 76, glycine 108, and 127–132 (FGRLTL).

Belongs to the RNA methyltransferase RlmH family. Homodimer.

It localises to the cytoplasm. The enzyme catalyses pseudouridine(1915) in 23S rRNA + S-adenosyl-L-methionine = N(3)-methylpseudouridine(1915) in 23S rRNA + S-adenosyl-L-homocysteine + H(+). Specifically methylates the pseudouridine at position 1915 (m3Psi1915) in 23S rRNA. The protein is Ribosomal RNA large subunit methyltransferase H of Listeria monocytogenes serovar 1/2a (strain ATCC BAA-679 / EGD-e).